The sequence spans 512 residues: Maturase K (512 aa).

The protein belongs to the intron maturase 2 family. MatK subfamily.

The protein localises to the plastid. Its subcellular location is the chloroplast. Usually encoded in the trnK tRNA gene intron. Probably assists in splicing its own and other chloroplast group II introns. This is Maturase K from Daucus carota (Wild carrot).